The primary structure comprises 113 residues: Protein translation factor SUI1 homolog 2 (113 aa).

Residue serine 2 is modified to N-acetylserine.

Belongs to the SUI1 family.

In terms of biological role, probably involved in translation. The protein is Protein translation factor SUI1 homolog 2 of Arabidopsis thaliana (Mouse-ear cress).